The sequence spans 237 residues: Small ribosomal subunit protein uS3 (237 aa).

The 69-residue stretch at 39 to 107 (IRAYLMEELK…ETHLNIVEVR (69 aa)) folds into the KH type-2 domain. Residues 213–237 (MASERRATESDNQGGGGRDRRRENA) are disordered.

Belongs to the universal ribosomal protein uS3 family. As to quaternary structure, part of the 30S ribosomal subunit. Forms a tight complex with proteins S10 and S14.

In terms of biological role, binds the lower part of the 30S subunit head. Binds mRNA in the 70S ribosome, positioning it for translation. The protein is Small ribosomal subunit protein uS3 of Sinorhizobium fredii (strain NBRC 101917 / NGR234).